Consider the following 515-residue polypeptide: Recombining binding protein suppressor of hairless-like protein (515 aa).

The disordered stretch occupies residues 1–40; sequence MDPRETTDPSLPPGPLTHLSLPDSSEVRLQSDGPSLLGSW. DNA-binding regions lie at residues 76–86, 191–196, and 218–223; these read QKSYGNEKRFF, SKPSQK, and RLRSQT. Residues 384–474 form the IPT/TIG domain; it reads PLISTLELSG…YPSPFSFTYT (91 aa).

It belongs to the Su(H) family. Interacts weakly with EBNA2. Does not interact with any Notch proteins. As to expression, highly expressed in lung. Also detected in spleen, and brain.

The protein resides in the nucleus. In terms of biological role, putative transcription factor, which cooperates with EBNA2 to activate transcription. The protein is Recombining binding protein suppressor of hairless-like protein (Rbpjl) of Mus musculus (Mouse).